A 267-amino-acid chain; its full sequence is Probable 3-methyl-2-oxobutanoate hydroxymethyltransferase (267 aa).

The protein belongs to the PanB family.

The catalysed reaction is 3-methyl-2-oxobutanoate + (6R)-5,10-methylene-5,6,7,8-tetrahydrofolate + H2O = 2-dehydropantoate + (6S)-5,6,7,8-tetrahydrofolate. The protein operates within cofactor biosynthesis; (R)-pantothenate biosynthesis; (R)-pantoate from 3-methyl-2-oxobutanoate: step 1/2. This is Probable 3-methyl-2-oxobutanoate hydroxymethyltransferase from Schizosaccharomyces pombe (strain 972 / ATCC 24843) (Fission yeast).